Reading from the N-terminus, the 325-residue chain is Cytochrome c biogenesis protein CcsA (325 aa).

The next 8 membrane-spanning stretches (helical) occupy residues 12-32 (HISFSVVSILISIHLITLLFV), 45-65 (GMIITFFCITGLLVTRWVFSG), 72-92 (LYESLIFLSWTFSIFYMVPYF), 100-120 (LNTIITPSVIFTQGFATSGLL), 145-165 (MILGYATLLCGSLLSVAILVI), 231-251 (TISLGFIFLTIGIISGAVWAN), 264-281 (ETWAFITWTIFAIYLHTR), and 293-313 (IVASIGFLIIWVCYLGINLLG).

The protein belongs to the CcmF/CycK/Ccl1/NrfE/CcsA family. In terms of assembly, may interact with Ccs1.

The protein localises to the plastid. Its subcellular location is the chloroplast thylakoid membrane. Its function is as follows. Required during biogenesis of c-type cytochromes (cytochrome c6 and cytochrome f) at the step of heme attachment. This Glycine max (Soybean) protein is Cytochrome c biogenesis protein CcsA.